The sequence spans 476 residues: Serine protease HTRA1B (476 aa).

Positions 1-19 (MRLLILCASIILVPLLCDA) are cleaved as a signal peptide. In terms of domain architecture, IGFBP N-terminal spans 25-109 (YVIGCPERCD…RGKTGVCVCK (85 aa)). 6 cysteine pairs are disulfide-bonded: Cys-29–Cys-54, Cys-33–Cys-56, Cys-38–Cys-57, Cys-45–Cys-60, Cys-68–Cys-85, and Cys-79–Cys-106. The Kazal-like domain maps to 94–153 (TTTVRRRGKTGVCVCKSSEPVCGSDGVSYRNICELKRVSNRAQKLQQPPIIFIQRGACGK). The serine protease stretch occupies residues 200 to 360 (GSGFVVSEDG…IPSDKIRQFL (161 aa)). Residues His-216, Asp-246, and Ser-324 each act as charge relay system in the active site. One can recognise a PDZ domain in the interval 361-463 (AESHDRQAKG…LRAVVRRGNE (103 aa)).

It belongs to the peptidase S1C family. Forms homotrimers. In the presence of substrate, may form higher-order multimers in a PDZ-independent manner.

The protein resides in the secreted. It localises to the cytoplasm. The protein localises to the cytosol. Functionally, serine protease with a variety of targets, including extracellular matrix proteins and proteoglycans. Through cleavage of proteoglycans, may release soluble FGF-glycosaminoglycan complexes that promote the range and intensity of FGF signals in the extracellular space. Regulates the availability of insulin-like growth factors (IGFs) by cleaving IGF-binding proteins. Inhibits signaling mediated by TGF-beta family members. Consequently, may regulate many physiological processes. Intracellularly, degrades TSC2, leading to the activation of TSC2 downstream targets. In Danio rerio (Zebrafish), this protein is Serine protease HTRA1B (htra1b).